Reading from the N-terminus, the 609-residue chain is UvrABC system protein C (609 aa).

Positions 16–94 constitute a GIY-YIG domain; it reads SSPGVYRMYD…IKQYMPKYNV (79 aa). In terms of domain architecture, UVR spans 203 to 238; that stretch reads QQVMSVLVQKMEQASSDMRYEQAALYRDQITALRRV.

The protein belongs to the UvrC family. In terms of assembly, interacts with UvrB in an incision complex.

The protein localises to the cytoplasm. Its function is as follows. The UvrABC repair system catalyzes the recognition and processing of DNA lesions. UvrC both incises the 5' and 3' sides of the lesion. The N-terminal half is responsible for the 3' incision and the C-terminal half is responsible for the 5' incision. The sequence is that of UvrABC system protein C from Shewanella pealeana (strain ATCC 700345 / ANG-SQ1).